A 129-amino-acid chain; its full sequence is D-ribose pyranase 2 (129 aa).

The Proton donor role is filled by H20. Residues D28, H96, and 118 to 120 contribute to the substrate site; that span reads YAN.

It belongs to the RbsD / FucU family. RbsD subfamily. Homodecamer.

It localises to the cytoplasm. The enzyme catalyses beta-D-ribopyranose = beta-D-ribofuranose. It participates in carbohydrate metabolism; D-ribose degradation; D-ribose 5-phosphate from beta-D-ribopyranose: step 1/2. In terms of biological role, catalyzes the interconversion of beta-pyran and beta-furan forms of D-ribose. This Streptomyces griseus subsp. griseus (strain JCM 4626 / CBS 651.72 / NBRC 13350 / KCC S-0626 / ISP 5235) protein is D-ribose pyranase 2.